Reading from the N-terminus, the 416-residue chain is Enolase (416 aa).

Position 156 (glutamine 156) interacts with (2R)-2-phosphoglycerate. Glutamate 200 (proton donor) is an active-site residue. Positions 236, 281, and 308 each coordinate Mg(2+). Positions 333, 362, 363, and 384 each coordinate (2R)-2-phosphoglycerate. Catalysis depends on lysine 333, which acts as the Proton acceptor.

The protein belongs to the enolase family. The cofactor is Mg(2+).

Its subcellular location is the cytoplasm. It localises to the secreted. It is found in the cell surface. It catalyses the reaction (2R)-2-phosphoglycerate = phosphoenolpyruvate + H2O. It functions in the pathway carbohydrate degradation; glycolysis; pyruvate from D-glyceraldehyde 3-phosphate: step 4/5. Its function is as follows. Catalyzes the reversible conversion of 2-phosphoglycerate (2-PG) into phosphoenolpyruvate (PEP). It is essential for the degradation of carbohydrates via glycolysis. This chain is Enolase, found in Methanothermobacter thermautotrophicus (strain ATCC 29096 / DSM 1053 / JCM 10044 / NBRC 100330 / Delta H) (Methanobacterium thermoautotrophicum).